We begin with the raw amino-acid sequence, 363 residues long: Carbamoyl phosphate synthase small chain (363 aa).

The segment at methionine 1–glycine 173 is CPSase. Serine 46, glycine 225, and glycine 227 together coordinate L-glutamine. The Glutamine amidotransferase type-1 domain maps to lysine 177–glycine 363. Cysteine 253 (nucleophile) is an active-site residue. The L-glutamine site is built by leucine 254, glutamine 257, asparagine 295, glycine 297, and phenylalanine 298. Active-site residues include histidine 336 and glutamate 338.

The protein belongs to the CarA family. In terms of assembly, composed of two chains; the small (or glutamine) chain promotes the hydrolysis of glutamine to ammonia, which is used by the large (or ammonia) chain to synthesize carbamoyl phosphate. Tetramer of heterodimers (alpha,beta)4.

The catalysed reaction is hydrogencarbonate + L-glutamine + 2 ATP + H2O = carbamoyl phosphate + L-glutamate + 2 ADP + phosphate + 2 H(+). It catalyses the reaction L-glutamine + H2O = L-glutamate + NH4(+). Its pathway is amino-acid biosynthesis; L-arginine biosynthesis; carbamoyl phosphate from bicarbonate: step 1/1. It functions in the pathway pyrimidine metabolism; UMP biosynthesis via de novo pathway; (S)-dihydroorotate from bicarbonate: step 1/3. Functionally, small subunit of the glutamine-dependent carbamoyl phosphate synthetase (CPSase). CPSase catalyzes the formation of carbamoyl phosphate from the ammonia moiety of glutamine, carbonate, and phosphate donated by ATP, constituting the first step of 2 biosynthetic pathways, one leading to arginine and/or urea and the other to pyrimidine nucleotides. The small subunit (glutamine amidotransferase) binds and cleaves glutamine to supply the large subunit with the substrate ammonia. This chain is Carbamoyl phosphate synthase small chain, found in Leptospira interrogans serogroup Icterohaemorrhagiae serovar copenhageni (strain Fiocruz L1-130).